The following is a 309-amino-acid chain: HPr kinase/phosphorylase (309 aa).

Residues His138 and Lys159 contribute to the active site. ATP is bound at residue 153 to 160; that stretch reads GQSGVGKS. Residue Ser160 coordinates Mg(2+). Catalysis depends on Asp177, which acts as the Proton acceptor; for phosphorylation activity. Proton donor; for dephosphorylation activity. The tract at residues 201 to 210 is important for the catalytic mechanism of both phosphorylation and dephosphorylation; it reads LEIRGLGIIN. Glu202 is a Mg(2+) binding site. Arg243 is a catalytic residue. Residues 264 to 269 are important for the catalytic mechanism of dephosphorylation; the sequence is PVRPGR.

It belongs to the HPrK/P family. As to quaternary structure, homohexamer. It depends on Mg(2+) as a cofactor.

The enzyme catalyses [HPr protein]-L-serine + ATP = [HPr protein]-O-phospho-L-serine + ADP + H(+). It carries out the reaction [HPr protein]-O-phospho-L-serine + phosphate + H(+) = [HPr protein]-L-serine + diphosphate. Catalyzes the ATP- as well as the pyrophosphate-dependent phosphorylation of a specific serine residue in HPr, a phosphocarrier protein of the phosphoenolpyruvate-dependent sugar phosphotransferase system (PTS). HprK/P also catalyzes the pyrophosphate-producing, inorganic phosphate-dependent dephosphorylation (phosphorolysis) of seryl-phosphorylated HPr (P-Ser-HPr). The two antagonistic activities of HprK/P are regulated by several intracellular metabolites, which change their concentration in response to the absence or presence of rapidly metabolisable carbon sources (glucose, fructose, etc.) in the growth medium. Also phosphorylates/dephosphorylates the HPr-like catabolite repression protein crh on a specific serine residue. Therefore, by controlling the phosphorylation state of HPr and crh, HPrK/P is a sensor enzyme that plays a major role in the regulation of carbon metabolism and sugar transport: it mediates carbon catabolite repression (CCR), and regulates PTS-catalyzed carbohydrate uptake and inducer exclusion. This chain is HPr kinase/phosphorylase, found in Bacillus cereus (strain G9842).